The sequence spans 247 residues: 5-hydroxytryptamine receptor 2A (247 aa).

A topological domain (extracellular) is located at residue lysine 1. A helical transmembrane segment spans residues 2–26 (LCAIWIYLDVLFSTASIMHLCAISL). Cysteine 3 and cysteine 82 are disulfide-bonded. Aspartate 10 is a serotonin binding site. The DRY motif; important for ligand-induced conformation changes motif lies at 27–29 (DRY). Over 27 to 46 (DRYVAIQNPIHHSRFNSRTK) the chain is Cytoplasmic. Residues 47 to 70 (AFLKIIAVWTISVGISMPVPVFGL) form a helical membrane-spanning segment. Residues 71-87 (QDDSKVFKEGSCLLADD) are Extracellular-facing. The helical transmembrane segment at 88 to 113 (NFVLIGSFVAFFIPLTIMVITYFLTI) threads the bilayer. The Cytoplasmic portion of the chain corresponds to 114–177 (KSLQKEATLC…QSISNEQKAC (64 aa)). Phosphoserine is present on serine 135. A helical membrane pass occupies residues 178–203 (KVLGIVFFLFVVMWCPFFVTNIMAVI). Position 198 (asparagine 198) interacts with serotonin. Cysteine 204 and cysteine 208 form a disulfide bridge. Over 204 to 211 (CKESCNED) the chain is Extracellular. Residues 212–237 (VIGALLNVFVWIGYLSSAVNPLVYTL) traverse the membrane as a helical segment. The NPxxY motif; important for ligand-induced conformation changes and signaling signature appears at 231-235 (NPLVY). Over 238–247 (FNKTYRSAFA) the chain is Cytoplasmic.

The protein belongs to the G-protein coupled receptor 1 family. Interacts (via C-terminus) with MPDZ and PATJ. May interact (via C-terminus) with MPP3, PRDX6, DLG4, DLG1, CASK, APBA1 and MAGI2. Interacts with GRM2 and DRD2; this may affect signaling. Detected in adult intestine, especially in mucosal epithelium, longitudinal and circular layers of muscularis externa and myenteric plexuses. Highly expressed in Paneth cells, and detected at lower levels in enterocytes (at protein level).

The protein resides in the cell membrane. It is found in the cell projection. Its subcellular location is the dendrite. It localises to the axon. The protein localises to the cytoplasmic vesicle. The protein resides in the membrane. It is found in the caveola. Its subcellular location is the presynapse. G-protein coupled receptor activity is regulated by lipids: oleamide increases HTR2A-mediated activity. In terms of biological role, G-protein coupled receptor for 5-hydroxytryptamine (serotonin). Also functions as a receptor for various drugs and psychoactive substances, including mescaline, psilocybin, 1-(2,5-dimethoxy-4-iodophenyl)-2-aminopropane (DOI) and lysergic acid diethylamide (LSD). Ligand binding causes a conformation change that triggers signaling via guanine nucleotide-binding proteins (G proteins) and modulates the activity of downstream effectors. HTR2A is coupled to G(q)/G(11) G alpha proteins and activates phospholipase C-beta, releasing diacylglycerol (DAG) and inositol 1,4,5-trisphosphate (IP3) second messengers that modulate the activity of phosphatidylinositol 3-kinase and promote the release of Ca(2+) ions from intracellular stores, respectively. Beta-arrestin family members inhibit signaling via G proteins and mediate activation of alternative signaling pathways. Affects neural activity, perception, cognition and mood. Plays a role in the regulation of behavior, including responses to anxiogenic situations and psychoactive substances. Plays a role in intestinal smooth muscle contraction, and may play a role in arterial vasoconstriction. The sequence is that of 5-hydroxytryptamine receptor 2A (HTR2A) from Cavia porcellus (Guinea pig).